Consider the following 148-residue polypeptide: Proteasome chaperone 4 (148 aa).

This sequence belongs to the PSMG4 family. Component of the 20S proteasome chaperone. Forms a heterodimer with IRC25 that binds to proteasome precursors. Interacts with POP2.

The protein localises to the cytoplasm. Involved in 20S proteasome assembly, facilitating the alpha-ring formation. Involved in maintenance of telomere length. This Saccharomyces cerevisiae (strain ATCC 204508 / S288c) (Baker's yeast) protein is Proteasome chaperone 4 (POC4).